A 360-amino-acid polypeptide reads, in one-letter code: (+)-6a-hydroxymaackiain 3-O-methyltransferase 2 (360 aa).

S-adenosyl-L-methionine-binding positions include 202–205 (VAGG), D226, 226–227 (DQ), 246–247 (DM), and K260. Catalysis depends on H264, which acts as the Proton acceptor.

It belongs to the class I-like SAM-binding methyltransferase superfamily. Cation-independent O-methyltransferase family. COMT subfamily.

The enzyme catalyses (+)-6a-hydroxymaackiain + S-adenosyl-L-methionine = (+)-pisatin + S-adenosyl-L-homocysteine + H(+). Its function is as follows. 3-O-methyltransferase involved in the phytoalexin pisatin biosynthesis. Can use (+)-6a-hydroxymaackiain, (+)-maackiain and with a lower activity (+)-medicarpin and 2,7,4'-trihydroxyisoflavanone as substrates, but not (-)-6a-hydroxymaackiain, daidzein, formononetin or isoliquiritigenin. The polypeptide is (+)-6a-hydroxymaackiain 3-O-methyltransferase 2 (HMM2) (Pisum sativum (Garden pea)).